A 402-amino-acid chain; its full sequence is Diaminopimelate decarboxylase (402 aa).

N6-(pyridoxal phosphate)lysine is present on K61. Residues G233 and 269–272 (EPGR) contribute to the pyridoxal 5'-phosphate site. Substrate-binding residues include R272, R304, Y308, E334, and Y360. Y360 is a binding site for pyridoxal 5'-phosphate.

Belongs to the Orn/Lys/Arg decarboxylase class-II family. LysA subfamily. As to quaternary structure, homodimer. It depends on pyridoxal 5'-phosphate as a cofactor.

It catalyses the reaction meso-2,6-diaminopimelate + H(+) = L-lysine + CO2. Its pathway is amino-acid biosynthesis; L-lysine biosynthesis via DAP pathway; L-lysine from DL-2,6-diaminopimelate: step 1/1. Its function is as follows. Specifically catalyzes the decarboxylation of meso-diaminopimelate (meso-DAP) to L-lysine. The sequence is that of Diaminopimelate decarboxylase from Thermoplasma acidophilum (strain ATCC 25905 / DSM 1728 / JCM 9062 / NBRC 15155 / AMRC-C165).